A 451-amino-acid chain; its full sequence is Tapasin-related protein (451 aa).

A signal peptide spans 1–20 (MGLEPSWYLLLCLAVSGAAG). At 21-412 (TDPPTAPTTA…RVLPNPEQRG (392 aa)) the chain is on the lumenal side. The region spanning 196-301 (FQVTSETQTL…TSLYQAQQIM (106 aa)) is the Ig-like V-type domain. 2 disulfides stabilise this stretch: Cys217-Cys288 and Cys326-Cys387. Asn270 and Asn277 each carry an N-linked (GlcNAc...) asparagine glycan. An Ig-like C1-type domain is found at 302 to 399 (PLNILAPPKI…AHVSLEEPLT (98 aa)). Residues 413-433 (TLGVIFASIIFLSALLLFLGL) form a helical membrane-spanning segment. Residues 434–451 (HRQQASSSRSTRPMRHSG) are Cytoplasmic-facing.

Interacts with peptide-free HLA-A*02-B2M complexes or those loaded with low affinity peptides, likely facilitating peptide exchange onto higher affinity peptides. Interacts with MR1 in a ligand-independent way; this interaction may stabilize MR1 pool and facilitate ligand loading and dissociation. Widely expressed.

The protein resides in the cell membrane. It localises to the endoplasmic reticulum membrane. It is found in the microsome membrane. Its subcellular location is the golgi apparatus membrane. Functionally, component of the antigen processing and presentation pathway, which binds to MHC class I coupled with beta2-microglobulin/B2M. Association between TAPBPR and MHC class I occurs in the absence of a functional peptide-loading complex (PLC). Expression seems to slow down and down-regulate MHC class I surface expression. This Mus musculus (Mouse) protein is Tapasin-related protein (Tapbpl).